Reading from the N-terminus, the 203-residue chain is GTP-binding protein rho4 (203 aa).

Glycine 21–threonine 28 contacts GTP. The Effector region motif lies at tyrosine 43–tyrosine 51. Aspartate 70 to glutamine 74 provides a ligand contact to GTP. Residue cysteine 200 is modified to Cysteine methyl ester. Cysteine 200 is lipidated: S-geranylgeranyl cysteine. Positions valine 201 to leucine 203 are cleaved as a propeptide — removed in mature form.

The protein belongs to the small GTPase superfamily. Rho family.

The protein resides in the membrane. Required for cell separation. Involved in the regulation of the septum degradation during cytokinesis and in the organization of F-actin patches and cytoplasmic microtubules. The chain is GTP-binding protein rho4 (rho4) from Schizosaccharomyces pombe (strain 972 / ATCC 24843) (Fission yeast).